The following is a 258-amino-acid chain: Small ribosomal subunit protein mS40 (258 aa).

Residues 1 to 35 constitute a mitochondrion transit peptide; sequence MAASVLNTLLRRLPMLSLFRGAHRVQVPLQTLCTK. Phosphoserine occurs at positions 38 and 49. A disordered region spans residues 218-258; it reads RLYQGHLREESGPPPESMPKMPPTAPAEASFTGQTDPQSAL. Positions 229 to 242 are enriched in pro residues; the sequence is GPPPESMPKMPPTA. Polar residues predominate over residues 248–258; sequence FTGQTDPQSAL.

The protein belongs to the bacterial ribosomal protein bS18 family. Mitochondrion-specific ribosomal protein mS40 subfamily. Component of the mitochondrial ribosome small subunit (28S) which comprises a 12S rRNA and about 30 distinct proteins.

It is found in the mitochondrion. The sequence is that of Small ribosomal subunit protein mS40 (MRPS18B) from Macaca mulatta (Rhesus macaque).